Reading from the N-terminus, the 146-residue chain is UPF0742 protein PB2B2.17c (146 aa).

A helical transmembrane segment spans residues L38–S60.

The protein belongs to the UPF0742 family.

The protein resides in the cytoplasm. The protein localises to the nucleus membrane. In Schizosaccharomyces pombe (strain 972 / ATCC 24843) (Fission yeast), this protein is UPF0742 protein PB2B2.17c.